A 77-amino-acid polypeptide reads, in one-letter code: MESFFNNSFATLIAYMGVITIYLLVIPLLLFYWMNNRWHVMGKYERLGIYGLVFLFFPGLILFSPFLNLRLKGSGKG.

Transmembrane regions (helical) follow at residues 12-32 (LIAY…LLFY) and 47-67 (LGIY…SPFL).

The protein belongs to the complex I NdhL subunit family. NDH-1 can be composed of about 15 different subunits; different subcomplexes with different compositions have been identified which probably have different functions.

It localises to the cellular thylakoid membrane. The catalysed reaction is a plastoquinone + NADH + (n+1) H(+)(in) = a plastoquinol + NAD(+) + n H(+)(out). The enzyme catalyses a plastoquinone + NADPH + (n+1) H(+)(in) = a plastoquinol + NADP(+) + n H(+)(out). Its function is as follows. NDH-1 shuttles electrons from an unknown electron donor, via FMN and iron-sulfur (Fe-S) centers, to quinones in the respiratory and/or the photosynthetic chain. The immediate electron acceptor for the enzyme in this species is believed to be plastoquinone. Couples the redox reaction to proton translocation, and thus conserves the redox energy in a proton gradient. Cyanobacterial NDH-1 also plays a role in inorganic carbon-concentration. The sequence is that of NAD(P)H-quinone oxidoreductase subunit L from Prochlorococcus marinus (strain MIT 9312).